The sequence spans 78 residues: Small ribosomal subunit protein eS21 (78 aa).

It belongs to the eukaryotic ribosomal protein eS21 family.

The sequence is that of Small ribosomal subunit protein eS21 (rps21) from Dictyostelium discoideum (Social amoeba).